Consider the following 366-residue polypeptide: tRNA/tmRNA (uracil-C(5))-methyltransferase (366 aa).

S-adenosyl-L-methionine is bound by residues glutamine 190, tyrosine 218, asparagine 223, glutamate 239, and aspartate 299. Cysteine 324 (nucleophile) is an active-site residue. Glutamate 358 (proton acceptor) is an active-site residue.

The protein belongs to the class I-like SAM-binding methyltransferase superfamily. RNA M5U methyltransferase family. TrmA subfamily.

The catalysed reaction is uridine(54) in tRNA + S-adenosyl-L-methionine = 5-methyluridine(54) in tRNA + S-adenosyl-L-homocysteine + H(+). It catalyses the reaction uridine(341) in tmRNA + S-adenosyl-L-methionine = 5-methyluridine(341) in tmRNA + S-adenosyl-L-homocysteine + H(+). Its function is as follows. Dual-specificity methyltransferase that catalyzes the formation of 5-methyluridine at position 54 (m5U54) in all tRNAs, and that of position 341 (m5U341) in tmRNA (transfer-mRNA). The protein is tRNA/tmRNA (uracil-C(5))-methyltransferase of Escherichia coli (strain ATCC 8739 / DSM 1576 / NBRC 3972 / NCIMB 8545 / WDCM 00012 / Crooks).